The following is a 362-amino-acid chain: Mitochondrial glycine transporter (362 aa).

Solcar repeat units lie at residues 22–108 (PDAT…MRTS), 132–236 (LTAM…FKND), and 269–354 (RSSI…LIKS). The next 6 membrane-spanning stretches (helical) occupy residues 28–53 (LLAG…TRLQ), 83–109 (GTLP…RTSW), 138–163 (LTTG…TRFE), 211–234 (GSVA…EAFK), 273–299 (INST…KTRL), and 329–347 (GLSL…SWCI).

Belongs to the mitochondrial carrier (TC 2.A.29) family. SLC25A38 subfamily.

Its subcellular location is the mitochondrion inner membrane. It carries out the reaction glycine(in) = glycine(out). In terms of biological role, mitochondrial glycine transporter that imports glycine into the mitochondrial matrix. Plays an important role in providing glycine for the first enzymatic step in heme biosynthesis, the condensation of glycine with succinyl-CoA to produce 5-aminolevulinate (ALA) in the mitochondrial matrix. The protein is Mitochondrial glycine transporter of Candida albicans (strain SC5314 / ATCC MYA-2876) (Yeast).